A 258-amino-acid chain; its full sequence is Deoxyribose-phosphate aldolase (258 aa).

Aspartate 101 serves as the catalytic Proton donor/acceptor. The active-site Schiff-base intermediate with acetaldehyde is the lysine 166. Catalysis depends on lysine 200, which acts as the Proton donor/acceptor.

It belongs to the DeoC/FbaB aldolase family. DeoC type 2 subfamily.

It localises to the cytoplasm. It catalyses the reaction 2-deoxy-D-ribose 5-phosphate = D-glyceraldehyde 3-phosphate + acetaldehyde. It participates in carbohydrate degradation; 2-deoxy-D-ribose 1-phosphate degradation; D-glyceraldehyde 3-phosphate and acetaldehyde from 2-deoxy-alpha-D-ribose 1-phosphate: step 2/2. Functionally, catalyzes a reversible aldol reaction between acetaldehyde and D-glyceraldehyde 3-phosphate to generate 2-deoxy-D-ribose 5-phosphate. In Actinobacillus pleuropneumoniae serotype 5b (strain L20), this protein is Deoxyribose-phosphate aldolase.